Consider the following 194-residue polypeptide: Exopolysaccharide II synthesis transcriptional activator ExpG (194 aa).

The HTH marR-type domain occupies 49–184; that stretch reads YFELARVMER…AFQTLHRLEL (136 aa).

In terms of biological role, transcriptional activator of genes for galactoglucan synthesis (exopolysaccharide II or EPS II). The chain is Exopolysaccharide II synthesis transcriptional activator ExpG (expG) from Rhizobium meliloti (strain 1021) (Ensifer meliloti).